Here is a 351-residue protein sequence, read N- to C-terminus: SH3 domain-containing protein 3 (351 aa).

Coiled-coil stretches lie at residues 1–21 and 193–213; these read MDAFRRQASKLRDQVAKQQLA and LQLAEAKMQELKANMAVLGKE. A BAR domain is found at 31 to 267; that stretch reads YESSDVMVID…MVTEKQHKES (237 aa). The region spanning 281–340 is the SH3 domain; it reads TSYFLAEVIHPFSAASEKELDLDKGDYIVVRKVSQTGWAEGECKGKAGWFPMAYIEKRQR.

As to quaternary structure, interacts with FREE1. Interacts (via SH3 domain) with DRP2A/ADL6. Binds to SH3P2. As to expression, detected in all tissues except seedlings.

It localises to the cytoplasmic vesicle. The protein resides in the clathrin-coated vesicle. Its function is as follows. May be involved in the recruitment of DRP2A to the accessory protein complex and in the negative regulation of its GTPase activity. This is SH3 domain-containing protein 3 from Arabidopsis thaliana (Mouse-ear cress).